The sequence spans 310 residues: Putative HTH-type transcriptional regulatory protein LS215_1371 (310 aa).

Residues 125–180 form the HTH cro/C1-type domain; that stretch reads LKHKREEMGYSIGDVAKFLGVSRKAIYDYEKGDSDVSLEVAEKLIDLFGDDIIGDV. Residues 136 to 155 constitute a DNA-binding region (H-T-H motif); it reads IGDVAKFLGVSRKAIYDYEK.

The protein is Putative HTH-type transcriptional regulatory protein LS215_1371 of Saccharolobus islandicus (strain L.S.2.15 / Lassen #1) (Sulfolobus islandicus).